Reading from the N-terminus, the 147-residue chain is Hemoglobin subunit beta-3 (147 aa).

Residues 3–147 enclose the Globin domain; that stretch reads HWTAEEKAVI…LVDALSHSYH (145 aa). Heme b-binding residues include His-64 and His-93.

Belongs to the globin family. In terms of assembly, heterotetramer of two alpha chains and two beta chains. Red blood cells.

This is a tadpole (larval) beta chain. This is Hemoglobin subunit beta-3 from Aquarana catesbeiana (American bullfrog).